Reading from the N-terminus, the 314-residue chain is (-)-isopiperitenone reductase (314 aa).

Val10–Ile33 lines the NADP(+) pocket. Residue Ser182 participates in substrate binding.

Belongs to the short-chain dehydrogenases/reductases (SDR) family.

The protein resides in the cytoplasm. It carries out the reaction (2R,5R)-isopulegone + NADP(+) = (6R)-isopiperitenone + NADPH + H(+). Its pathway is secondary metabolite biosynthesis; terpenoid biosynthesis. Monoterpene synthase that catalyzes the specific reduction of the 1(2)-double bond of (-)-isopiperitenone to produce (+)-cis-isopulegone. Does not catalyze the reverse reaction. Unable to reduce (+)-pulegone, (+)-cis-isopulegone, (-)-menthone or the 1,2-double bond of (-)-carvone. Able to utilize NADH with 20% the efficiency of NADPH. In Mentha piperita (Peppermint), this protein is (-)-isopiperitenone reductase.